The primary structure comprises 148 residues: Calcium-regulated heat stable protein 1 (148 aa).

Residues 1–12 (MSSEPPPPPLQP) are compositionally biased toward pro residues. Positions 1–47 (MSSEPPPPPLQPPTHQTSVGLLDTPRTRDRSPSPLRGNVVPSPLPTR) are disordered. Ser2 carries the N-acetylserine modification. Residues Ser31, Ser33, and Ser42 each carry the phosphoserine modification. Thr46 carries the phosphothreonine modification. Ser53 and Ser59 each carry phosphoserine. One can recognise a CSD domain in the interval 63–130 (VYKGVCKCFC…KLQAVEVVIT (68 aa)). Phosphoserine is present on Ser147.

As to quaternary structure, homodimer. Interacts with STYX. Can be phosphorylated by DYRK2 (in vitro). Dephosphorylated by calcineurin in a Ca(2+) dependent manner.

The protein localises to the cytoplasm. Its subcellular location is the P-body. It is found in the cytoplasmic granule. Functionally, binds mRNA and regulates the stability of target mRNA. The protein is Calcium-regulated heat stable protein 1 (Carhsp1) of Mus musculus (Mouse).